A 153-amino-acid polypeptide reads, in one-letter code: UPF0756 membrane protein BA_4840/GBAA_4840/BAS4489 (153 aa).

4 helical membrane-spanning segments follow: residues 8 to 28 (FLFILLIIGLIAKNQSLTVAI), 54 to 74 (LGVTVITIAVLVPIATGEIGF), 87 to 107 (WIALASGVAVALLAKGGVQLL), and 117 to 137 (LVFGTIIAVALFNGVAVGPLI).

This sequence belongs to the UPF0756 family.

Its subcellular location is the cell membrane. The chain is UPF0756 membrane protein BA_4840/GBAA_4840/BAS4489 from Bacillus anthracis.